A 119-amino-acid polypeptide reads, in one-letter code: Beta-2-microglobulin (119 aa).

The N-terminal stretch at 1–20 (MVCSVVVALLALLSLSGLEA) is a signal peptide. An Ig-like C1-type domain is found at 25 to 114 (PKIQVYSRHP…VTFSTPKTVK (90 aa)). Cys45 and Cys100 are disulfide-bonded.

The protein belongs to the beta-2-microglobulin family. As to quaternary structure, heterodimer of an alpha chain and a beta chain. Beta-2-microglobulin is the beta-chain of major histocompatibility complex class I molecules.

Its subcellular location is the secreted. Functionally, component of the class I major histocompatibility complex (MHC). Involved in the presentation of peptide antigens to the immune system. This chain is Beta-2-microglobulin (B2M), found in Cebuella pygmaea (Pygmy marmoset).